The primary structure comprises 150 residues: Endoribonuclease YbeY (150 aa).

Residues H108, H112, and H118 each contribute to the Zn(2+) site.

It belongs to the endoribonuclease YbeY family. It depends on Zn(2+) as a cofactor.

The protein resides in the cytoplasm. In terms of biological role, single strand-specific metallo-endoribonuclease involved in late-stage 70S ribosome quality control and in maturation of the 3' terminus of the 16S rRNA. The protein is Endoribonuclease YbeY of Methylococcus capsulatus (strain ATCC 33009 / NCIMB 11132 / Bath).